The chain runs to 290 residues: MIYYGTMFDHKVRFSIVRMREVVEEARNRHSLSYLATVVLGRALIGAALVTPWLAEKERWTLDIEGNGPIRRVVAQSTSEFTVRGYVANPKVELPLNEKGKFDVAGAIGQGVLRVVRDLGLKTPFVSQLPLVSGEIAEDLAYYFAVSEQIPSAFSIGVLVDSGGVKIAGGFAVQIIDRTLEQEKVELIERNIKNLPYITELFQKAEPLDVLERIFGEKVGFVETAEIRYKCDCNREKAKNALLVLDKKELEDMRKEGKGEVVCKWCNTKYVFSEEELEELLKFKVDNSGS.

Disulfide bonds link Cys231/Cys233 and Cys263/Cys266.

It belongs to the HSP33 family. Under oxidizing conditions two disulfide bonds are formed involving the reactive cysteines. Under reducing conditions zinc is bound to the reactive cysteines and the protein is inactive.

It is found in the cytoplasm. In terms of biological role, redox regulated molecular chaperone. Protects both thermally unfolding and oxidatively damaged proteins from irreversible aggregation. Plays an important role in the bacterial defense system toward oxidative stress. In Thermotoga petrophila (strain ATCC BAA-488 / DSM 13995 / JCM 10881 / RKU-1), this protein is 33 kDa chaperonin.